A 78-amino-acid polypeptide reads, in one-letter code: MSRVCQLSGKRANNGMAVSHSHVRTKKLQQVNLQQRRLWWAEGNRWVKLRVSTSALRTIQKKGLGAYAKELGINLAKI.

The disordered stretch occupies residues 1–21 (MSRVCQLSGKRANNGMAVSHS).

Belongs to the bacterial ribosomal protein bL28 family.

The sequence is that of Large ribosomal subunit protein bL28 from Synechococcus sp. (strain RCC307).